A 22-amino-acid polypeptide reads, in one-letter code: thr operon leader peptide (22 aa).

The segment at 1–22 (MRNISLTTTIITTTDTTGNGAG) is disordered. Residues 7–22 (TTTIITTTDTTGNGAG) are compositionally biased toward low complexity.

The protein belongs to the thr operon leader peptide family.

Functionally, this protein is involved in control of the biosynthesis of threonine. The chain is thr operon leader peptide from Serratia marcescens.